Reading from the N-terminus, the 119-residue chain is Holo-[acyl-carrier-protein] synthase (119 aa).

2 residues coordinate Mg(2+): Asp8 and Glu59.

Belongs to the P-Pant transferase superfamily. AcpS family. Mg(2+) is required as a cofactor.

The protein resides in the cytoplasm. It carries out the reaction apo-[ACP] + CoA = holo-[ACP] + adenosine 3',5'-bisphosphate + H(+). In terms of biological role, transfers the 4'-phosphopantetheine moiety from coenzyme A to a Ser of acyl-carrier-protein. The protein is Holo-[acyl-carrier-protein] synthase of Lactococcus lactis subsp. lactis (strain IL1403) (Streptococcus lactis).